Reading from the N-terminus, the 365-residue chain is Peptide chain release factor 2 (365 aa).

Q251 bears the N5-methylglutamine mark.

It belongs to the prokaryotic/mitochondrial release factor family. Methylated by PrmC. Methylation increases the termination efficiency of RF2.

It is found in the cytoplasm. Functionally, peptide chain release factor 2 directs the termination of translation in response to the peptide chain termination codons UGA and UAA. In Campylobacter jejuni subsp. jejuni serotype O:23/36 (strain 81-176), this protein is Peptide chain release factor 2.